Consider the following 243-residue polypeptide: Probable transcriptional regulatory protein BRE_29 (243 aa).

Belongs to the TACO1 family.

It is found in the cytoplasm. In Borrelia recurrentis (strain A1), this protein is Probable transcriptional regulatory protein BRE_29.